A 205-amino-acid polypeptide reads, in one-letter code: Urease accessory protein UreG 1 (205 aa).

A GTP-binding site is contributed by 14–21; sequence GPVGSGKT.

This sequence belongs to the SIMIBI class G3E GTPase family. UreG subfamily. As to quaternary structure, homodimer. UreD, UreF and UreG form a complex that acts as a GTP-hydrolysis-dependent molecular chaperone, activating the urease apoprotein by helping to assemble the nickel containing metallocenter of UreC. The UreE protein probably delivers the nickel.

The protein localises to the cytoplasm. Facilitates the functional incorporation of the urease nickel metallocenter. This process requires GTP hydrolysis, probably effectuated by UreG. The polypeptide is Urease accessory protein UreG 1 (Methylobacterium radiotolerans (strain ATCC 27329 / DSM 1819 / JCM 2831 / NBRC 15690 / NCIMB 10815 / 0-1)).